The sequence spans 107 residues: Phosphoribosyl-ATP pyrophosphatase (107 aa).

It belongs to the PRA-PH family.

It localises to the cytoplasm. The catalysed reaction is 1-(5-phospho-beta-D-ribosyl)-ATP + H2O = 1-(5-phospho-beta-D-ribosyl)-5'-AMP + diphosphate + H(+). It functions in the pathway amino-acid biosynthesis; L-histidine biosynthesis; L-histidine from 5-phospho-alpha-D-ribose 1-diphosphate: step 2/9. The protein is Phosphoribosyl-ATP pyrophosphatase of Sinorhizobium fredii (strain NBRC 101917 / NGR234).